The following is a 226-amino-acid chain: Probable chemoreceptor glutamine deamidase CheD (226 aa).

Positions 207 to 226 (PGGMRVERFDTPSRRDPVGA) are disordered.

It belongs to the CheD family.

It catalyses the reaction L-glutaminyl-[protein] + H2O = L-glutamyl-[protein] + NH4(+). Functionally, probably deamidates glutamine residues to glutamate on methyl-accepting chemotaxis receptors (MCPs), playing an important role in chemotaxis. The sequence is that of Probable chemoreceptor glutamine deamidase CheD from Bordetella bronchiseptica (strain ATCC BAA-588 / NCTC 13252 / RB50) (Alcaligenes bronchisepticus).